The following is a 236-amino-acid chain: 2-C-methyl-D-erythritol 4-phosphate cytidylyltransferase (236 aa).

It belongs to the IspD/TarI cytidylyltransferase family. IspD subfamily.

It carries out the reaction 2-C-methyl-D-erythritol 4-phosphate + CTP + H(+) = 4-CDP-2-C-methyl-D-erythritol + diphosphate. It participates in isoprenoid biosynthesis; isopentenyl diphosphate biosynthesis via DXP pathway; isopentenyl diphosphate from 1-deoxy-D-xylulose 5-phosphate: step 2/6. In terms of biological role, catalyzes the formation of 4-diphosphocytidyl-2-C-methyl-D-erythritol from CTP and 2-C-methyl-D-erythritol 4-phosphate (MEP). This Burkholderia cenocepacia (strain ATCC BAA-245 / DSM 16553 / LMG 16656 / NCTC 13227 / J2315 / CF5610) (Burkholderia cepacia (strain J2315)) protein is 2-C-methyl-D-erythritol 4-phosphate cytidylyltransferase.